The chain runs to 51 residues: Large ribosomal subunit protein eL39 (51 aa).

This sequence belongs to the eukaryotic ribosomal protein eL39 family.

This chain is Large ribosomal subunit protein eL39 (RpL39), found in Plutella xylostella (Diamondback moth).